A 343-amino-acid chain; its full sequence is Nicotianamine synthase 3 (343 aa).

Belongs to the nicotianamine synthase (NAS)-like family. As to expression, expressed in leaves.

It carries out the reaction 3 S-adenosyl-L-methionine = nicotianamine + 3 S-methyl-5'-thioadenosine + 3 H(+). Synthesizes nicotianamine, a polyamine that is the first intermediate in the synthesis of the phytosiderophores of the mugineic acid type found in gramineae which serve as a sensor for the physiological iron status within the plant, and/or might be involved in the transport of iron. The polypeptide is Nicotianamine synthase 3 (NAS3) (Oryza sativa subsp. indica (Rice)).